The following is a 185-amino-acid chain: Elongation factor P (185 aa).

This sequence belongs to the elongation factor P family.

It localises to the cytoplasm. It participates in protein biosynthesis; polypeptide chain elongation. Involved in peptide bond synthesis. Stimulates efficient translation and peptide-bond synthesis on native or reconstituted 70S ribosomes in vitro. Probably functions indirectly by altering the affinity of the ribosome for aminoacyl-tRNA, thus increasing their reactivity as acceptors for peptidyl transferase. This chain is Elongation factor P (efp), found in Nostoc sp. (strain PCC 7120 / SAG 25.82 / UTEX 2576).